A 244-amino-acid polypeptide reads, in one-letter code: Capsid protein (244 aa).

The Bipartite nuclear localization signal motif lies at 1–24 (MSTSKRKRGDDSNWSKRVTKKKPS). The segment at 1–39 (MSTSKRKRGDDSNWSKRVTKKKPSSAGLKRAGSKADRPS) is disordered.

This sequence belongs to the geminiviridae capsid protein family. Homomultimer. Interacts with the movement protein. Binds to single-stranded and double-stranded viral DNA.

It is found in the virion. Its subcellular location is the host nucleus. Functionally, encapsidates the viral genome into characteristic twinned ('geminate') particles. Binds the genomic viral ssDNA and shuttles it into and out of the cell nucleus. Plays a role in protection of the genome from degradation, virus acquisition and transmission by insect vectors, infectivity, and systemic movement. The CP of monopartite geminiviruses is absolutely essential for virus movement. This is Capsid protein from Avena sativa (Oat).